Reading from the N-terminus, the 427-residue chain is Pre-mRNA-splicing factor PRP46 (427 aa).

WD repeat units lie at residues 113–153 (GHHG…LKVT), 156–195 (AHDMTVRDLAISNRHPYMFSVSEDKTVKCWDLEKNTAIRN), 198–237 (GHLSGVHTVDIHPTVDVVVTAGRDSVVKVWDIRTRLPVMT), 240–281 (GHKG…KVLT), 283–322 (HQRTVRDISVHPSEFSFASACTNDIRSWLLPKGELLTNFV), 324–362 (QDLDVINTVSINQDDVLFAGSDNGSLTFFDYKSGHKYQT), and 373–412 (ESERGILSSTFDGTGLRLLTGETDRTIKIWKQDETASQDT). The segment at 404–427 (QDETASQDTHPNLPWNPKLDSQRL) is disordered.

The protein belongs to the WD repeat PRL1/PRL2 family. In terms of assembly, associated with the spliceosome.

It localises to the cytoplasm. Its subcellular location is the nucleus. Functionally, involved in pre-mRNA splicing and required for cell cycle progression at G2/M. This Candida glabrata (strain ATCC 2001 / BCRC 20586 / JCM 3761 / NBRC 0622 / NRRL Y-65 / CBS 138) (Yeast) protein is Pre-mRNA-splicing factor PRP46 (PRP46).